The chain runs to 457 residues: Glutamate--tRNA ligase 2 (457 aa).

Positions 9–19 match the 'HIGH' region motif; sequence PSPTGRIHIGN. Positions 250-254 match the 'KMSKS' region motif; it reads GLSKR. Residue Lys253 coordinates ATP.

It belongs to the class-I aminoacyl-tRNA synthetase family. Glutamate--tRNA ligase type 1 subfamily. In terms of assembly, monomer.

It is found in the cytoplasm. The enzyme catalyses tRNA(Glu) + L-glutamate + ATP = L-glutamyl-tRNA(Glu) + AMP + diphosphate. Catalyzes the attachment of glutamate to tRNA(Glu) in a two-step reaction: glutamate is first activated by ATP to form Glu-AMP and then transferred to the acceptor end of tRNA(Glu). This Mesorhizobium japonicum (strain LMG 29417 / CECT 9101 / MAFF 303099) (Mesorhizobium loti (strain MAFF 303099)) protein is Glutamate--tRNA ligase 2.